The following is a 582-amino-acid chain: Acylamino-acid-releasing enzyme (582 aa).

Active-site charge relay system residues include Ser445, Asp524, and His556.

It belongs to the peptidase S9C family.

It is found in the cytoplasm. The catalysed reaction is Cleavage of an N-acetyl or N-formyl amino acid from the N-terminus of a polypeptide.. In terms of biological role, this enzyme catalyzes the hydrolysis of the N-terminal peptide bond of an N-acetylated peptide to generate an N-acetylated amino acid and a peptide with a free N-terminus. The sequence is that of Acylamino-acid-releasing enzyme from Aeropyrum pernix (strain ATCC 700893 / DSM 11879 / JCM 9820 / NBRC 100138 / K1).